Consider the following 102-residue polypeptide: Small ribosomal subunit protein eS24 (102 aa).

It belongs to the eukaryotic ribosomal protein eS24 family.

The protein is Small ribosomal subunit protein eS24 of Methanococcoides burtonii (strain DSM 6242 / NBRC 107633 / OCM 468 / ACE-M).